The chain runs to 356 residues: Transcription factor MafB (356 aa).

Disordered stretches follow at residues 49–79 (RLQP…PTEQ) and 140–240 (YRGA…LNVE). The span at 55-77 (SVSSTPISTPCSSVPSSPSFSPT) shows a compositional bias: low complexity. 2 stretches are compositionally biased toward basic residues: residues 183 to 196 (AHGH…HHHH) and 212 to 223 (HHRHHHHHHPHG). Positions 270–295 (RLKQKRRTLKNRGYAQSCRFKRVQQK) are basic motif. One can recognise a bZIP domain in the interval 270–333 (RLKQKRRTLK…DAYKLKCEKL (64 aa)). The tract at residues 298-319 (LENEKTQLINQVEQLKQEINRL) is leucine-zipper.

The protein belongs to the bZIP family. Maf subfamily. In terms of assembly, homodimer or heterodimer with other bHLH-Zip transcription factors. Binds DNA as a homodimer or a heterodimer.

The protein resides in the nucleus. In terms of biological role, may act as a transcriptional activator or repressor. Involved in neurogenesis. Involved in the development of rhombomeres (r) 5 and 6 segments from their common precursor 'proto-segment' in the hindbrain. In Danio rerio (Zebrafish), this protein is Transcription factor MafB (mafb).